The chain runs to 144 residues: PE family protein PE9 (144 aa).

The PE domain maps to 1–87 (MSYMIATPAA…RTLTGGCGVF (87 aa)). Positions 98 to 124 (AAEHRAAGAGRRQRRRRSGDGQWRLRQ) are disordered.

This sequence belongs to the mycobacterial PE family. Forms a complex with PE10. The complex interacts with human TLR4.

It localises to the secreted. It is found in the cell wall. The protein resides in the cell surface. Its function is as follows. Together with PE10, induces macrophage apoptosis through human Toll-like receptor 4 (TLR4) signaling pathway. Interaction with TLR4 leads to increased levels of phospho-IRF-3, increase in the transcript levels of IFN-beta and pro-apoptotic genes, up-regulation of IL-10, down-regulation of IL-1b and enhanced levels of macrophage apoptosis. The protein is PE family protein PE9 of Mycobacterium tuberculosis (strain ATCC 25618 / H37Rv).